A 60-amino-acid polypeptide reads, in one-letter code: Large ribosomal subunit protein uL30 (60 aa).

This sequence belongs to the universal ribosomal protein uL30 family. As to quaternary structure, part of the 50S ribosomal subunit.

The polypeptide is Large ribosomal subunit protein uL30 (Leuconostoc citreum (strain KM20)).